The chain runs to 338 residues: Methionine import ATP-binding protein MetN 2 (338 aa).

In terms of domain architecture, ABC transporter spans 2–242 (IEIEKVCVDF…PQHAFTQQLV (241 aa)). 39-46 (GTSGAGKS) contacts ATP.

Belongs to the ABC transporter superfamily. Methionine importer (TC 3.A.1.24) family. The complex is composed of two ATP-binding proteins (MetN), two transmembrane proteins (MetI) and a solute-binding protein (MetQ).

The protein resides in the cell inner membrane. It catalyses the reaction L-methionine(out) + ATP + H2O = L-methionine(in) + ADP + phosphate + H(+). The enzyme catalyses D-methionine(out) + ATP + H2O = D-methionine(in) + ADP + phosphate + H(+). Functionally, part of the ABC transporter complex MetNIQ involved in methionine import. Responsible for energy coupling to the transport system. The chain is Methionine import ATP-binding protein MetN 2 from Salmonella typhi.